Reading from the N-terminus, the 692-residue chain is Methionine--tRNA ligase (692 aa).

A 'HIGH' region motif is present at residues 15 to 25 (PYANGPIHLGH). Zn(2+)-binding residues include C146, C149, C159, and C162. Residues 332–336 (KMSKS) carry the 'KMSKS' region motif. K335 is a binding site for ATP. Residues 552-577 (TTEAAPEKKAKKSAETADVAVDTRSP) are disordered. Positions 556 to 566 (APEKKAKKSAE) are enriched in basic and acidic residues. In terms of domain architecture, tRNA-binding spans 591-692 (DFAKLDLRIA…EGAQPGMRVK (102 aa)).

Belongs to the class-I aminoacyl-tRNA synthetase family. MetG type 1 subfamily. As to quaternary structure, homodimer. It depends on Zn(2+) as a cofactor.

The protein resides in the cytoplasm. The enzyme catalyses tRNA(Met) + L-methionine + ATP = L-methionyl-tRNA(Met) + AMP + diphosphate. In terms of biological role, is required not only for elongation of protein synthesis but also for the initiation of all mRNA translation through initiator tRNA(fMet) aminoacylation. This Shewanella sediminis (strain HAW-EB3) protein is Methionine--tRNA ligase.